The following is a 126-amino-acid chain: MPLRVELKPFERIVIGQSVITNSDTRTTFLIDGDAPILREKDILTAETANTPVKRIYLCVQMMYLQNDIPAYQDLYLGFIKELIEAVPSFRETIEATSNHILSGNLYKALRELRPLIKREEELLSR.

This sequence belongs to the FlbT family.

Its function is as follows. Has a post-transcriptional repressor function in flagellum biogenesis. Associates with the 5'-UTR of fljK mRNA and promotes its degradation. The protein is Probable flagellum biosynthesis repressor protein FlbT of Rhodopseudomonas palustris (strain ATCC BAA-98 / CGA009).